The following is an 817-amino-acid chain: Protein-glutamine gamma-glutamyltransferase K (817 aa).

Disordered regions lie at residues 1 to 38 (MMDGPRSDVGRWGGNPLQPPTTPSPEPEPEPDGRSRRG) and 59 to 105 (DDWG…DGTI). Positions 1–100 (MMDGPRSDVG…VSRGSGVNAA (100 aa)) are membrane anchorage region. Pro residues predominate over residues 17–26 (LQPPTTPSPE). Threonine 22 is modified (phosphothreonine). Serine 24, serine 68, serine 82, serine 85, serine 92, and serine 95 each carry phosphoserine. The segment covering 71 to 84 (RGSSSGTRRPGSRG) has biased composition (low complexity). Catalysis depends on residues cysteine 377, histidine 436, and aspartate 459. Positions 499, 501, 548, and 553 each coordinate Ca(2+). Positions 793 to 817 (GGFFSDAGGDSHLGETIPMASRGGA) are disordered.

This sequence belongs to the transglutaminase superfamily. Transglutaminase family. Interacts with PLAAT4. Ca(2+) is required as a cofactor. Palmitoylated. In terms of processing, the membrane anchorage region possesses a cluster of five cysteines within which fatty acid(s) may become thioester-linked. It is subject to phorbol ester-stimulated phosphorylation and is hypersensitive to proteolysis, which releases the enzyme in a soluble form. Post-translationally, tyrosine-phosphorylated.

It localises to the membrane. The catalysed reaction is L-glutaminyl-[protein] + L-lysyl-[protein] = [protein]-L-lysyl-N(6)-5-L-glutamyl-[protein] + NH4(+). In terms of biological role, catalyzes the cross-linking of proteins and the conjugation of polyamines to proteins. Responsible for cross-linking epidermal proteins during formation of the stratum corneum. Involved in cell proliferation. This is Protein-glutamine gamma-glutamyltransferase K (TGM1) from Homo sapiens (Human).